Here is a 369-residue protein sequence, read N- to C-terminus: MSGNTLGTLFTVTTFGESHGPAIGCVIDGCPPGMALTEADVQLELDRRKPGTSRHVTQRQEPDQVEILSGVFEGVTTGAPIALLIRNTDQRSKDYGNIVETFRPGHADYTYWQKYGVRDYRGGGRSSARLTAPVVGAGAIAKKWLRERFGVEVRGYMSALGEIEIPFVDWSHVRENPFFAPNADIVPQLEGYMDALRKDGDSIGARIDVVASGVPVGWGEPLFDRLDADIAHAMMGINAVKGVEIGAGFASVAQRGSVHGDELTPDGFVGNHAGGVLGGISTGQDITVSIAIKPTSSIRTPRRSITKAGEPAVIETFGRHDPCVGIRATPIAESMLALVLIDHALRHRAQCGDVSTATPKIAARAPQAQ.

Residues arginine 48 and arginine 54 each contribute to the NADP(+) site. FMN contacts are provided by residues 125-127 (RSS), 238-239 (NA), glycine 278, 293-297 (KPTSS), and arginine 319.

Belongs to the chorismate synthase family. Homotetramer. It depends on FMNH2 as a cofactor.

The enzyme catalyses 5-O-(1-carboxyvinyl)-3-phosphoshikimate = chorismate + phosphate. Its pathway is metabolic intermediate biosynthesis; chorismate biosynthesis; chorismate from D-erythrose 4-phosphate and phosphoenolpyruvate: step 7/7. Functionally, catalyzes the anti-1,4-elimination of the C-3 phosphate and the C-6 proR hydrogen from 5-enolpyruvylshikimate-3-phosphate (EPSP) to yield chorismate, which is the branch point compound that serves as the starting substrate for the three terminal pathways of aromatic amino acid biosynthesis. This reaction introduces a second double bond into the aromatic ring system. The polypeptide is Chorismate synthase (Burkholderia thailandensis (strain ATCC 700388 / DSM 13276 / CCUG 48851 / CIP 106301 / E264)).